The following is a 1357-amino-acid chain: Vascular endothelial growth factor receptor 2 (1357 aa).

The first 22 residues, 1-22 (MAKTSYALLLLDILLTFNVAKA), serve as a signal peptide directing secretion. Over 23-774 (IELRFVPDPP…GAEEKMNVEL (752 aa)) the chain is Extracellular. 7 consecutive Ig-like C2-type domains span residues 32-120 (PTLN…SVAV), 120-222 (VYVF…VAVV), 216-330 (PYIV…ASLI), 335-426 (PFIA…RTFQ), 433-553 (PRIF…VIVF), 556-667 (TRFL…LLHN), and 676-762 (SRIV…ARIS). N-linked (GlcNAc...) asparagine glycosylation is found at Asn-35, Asn-44, Asn-66, Asn-97, Asn-161, Asn-209, Asn-247, Asn-272, Asn-303, Asn-307, Asn-407, Asn-501, Asn-560, Asn-621, Asn-631, Asn-640, Asn-681, Asn-688, and Asn-713. Intrachain disulfides connect Cys-53–Cys-104 and Cys-153–Cys-203. A disulfide bridge connects residues Cys-248 and Cys-314. A disulfide bridge links Cys-457 with Cys-538. Residues Cys-579 and Cys-651 are joined by a disulfide bond. Cys-697 and Cys-746 are disulfide-bonded. The helical transmembrane segment at 775-795 (IMPIGAVVIAMFLWLLIVFVI) threads the bilayer. Residues 796–1357 (RNRKRPNDGD…AEVRYSAPPV (562 aa)) lie on the Cytoplasmic side of the membrane. The region spanning 843-1173 (LKLGEPLGRG…FTQLVEHLGN (331 aa)) is the Protein kinase domain. ATP contacts are provided by residues 849 to 857 (LGRGAFGQV) and Lys-877. Positions 944 to 975 (YSPYKKRTPRMPNRREVQQDEDPREGDLGLGT) are disordered. The active-site Proton acceptor is the Asp-1039. Phosphotyrosine; by autocatalysis is present on residues Tyr-1065, Tyr-1070, Tyr-1186, and Tyr-1222. The disordered stretch occupies residues 1296 to 1357 (SLASESSNQT…AEVRYSAPPV (62 aa)). Positions 1298 to 1312 (ASESSNQTSGYQSGY) are enriched in polar residues.

This sequence belongs to the protein kinase superfamily. Tyr protein kinase family. CSF-1/PDGF receptor subfamily. In terms of assembly, interacts with isoform VEGF165 of vegfaa and, to a lesser extent, with isoform VEGF171 of vegfab. Interacts (via juxtamembrane region) with chaperone pdcl3 (via thioredoxin fold region); the interaction leads to increased vegfr2 abundance through inhibition of its ubiquitination and degradation. In terms of tissue distribution, first expressed in embryos between 5- and 7-somites in the bilateral stripes that contain the developing angioblasts, and then localized to the intermediate cell mass (ICM) and the developing vasculature. By 30 hpf, expressed in the major trunk, head and intersomitic vessels, persisting through 4 dpf when expression is seen in developing subintestinal veins and in the remaining vasculature.

Its subcellular location is the cell membrane. It is found in the cytoplasm. The protein resides in the nucleus. It localises to the cytoplasmic vesicle. The protein localises to the early endosome. Its subcellular location is the cell junction. It is found in the endoplasmic reticulum. The enzyme catalyses L-tyrosyl-[protein] + ATP = O-phospho-L-tyrosyl-[protein] + ADP + H(+). Its function is as follows. Receptor for VEGF or VEGFC. Has a tyrosine-protein kinase activity. Combinations of multiple VEGF receptors are required for development of different blood vessel types in the embryo. Involved in angiogenesis, specifically in VEGF-induced sprouting of new blood vessels. Particularly involved in artery formation. Does not appear to be required for hematopoiesis. This is Vascular endothelial growth factor receptor 2 from Danio rerio (Zebrafish).